Consider the following 18562-residue polypeptide: Titin homolog (18562 aa).

The Ig-like 1 domain maps to 90–176; it reads PKFIQVIKAY…GVSTSYGYIT (87 aa). Positions 384-404 are disordered; that stretch reads RFHPQPPKPPRAGTSRRFLPE. Ig-like domains lie at 406 to 493, 821 to 913, 943 to 1038, and 1135 to 1225; these read PKFV…TQVT, PKIV…AFIN, PKFI…LTIS, and PRFE…LTVD. An intrachain disulfide couples Cys-842 to Cys-897. The segment at 1336 to 1360 is disordered; it reads LPPVQKSMSVQEEKASSQRTPSPMN. The Ig-like 6 domain maps to 1679-1762; the sequence is PKFLRKLVNC…ASNVAGTTFS (84 aa). Cys-1700 and Cys-1751 form a disulfide bridge. Coiled-coil stretches lie at residues 1766-1786, 2011-2038, and 2065-2085; these read LKLS…SEIK, QSLD…ERTS, and ISDQ…ALQE. The interval 2155-2177 is disordered; that stretch reads RKGSDKDKRKATRIKRVPSAHSA. Residues 2163–2172 show a composition bias toward basic residues; that stretch reads RKATRIKRVP. The stretch at 2205–2231 forms a coiled coil; it reads LKQNEEAKEIQELFVKIEKEINTIAEL. 2 disordered regions span residues 2298–2459 and 2614–2637; these read IIGI…TADA and KSSL…EVTA. Residues 2309-2323 are compositionally biased toward low complexity; it reads RRPSSTPRGSTRSSN. The segment covering 2324-2341 has biased composition (polar residues); that stretch reads LTTSQDSQATTKMTVSSE. Residues 2606–2630 are a coiled coil; sequence LMQTLASEKSSLKAAEEDEKEGEEE. A compositionally biased stretch (acidic residues) spans 2621 to 2636; it reads EEDEKEGEEEGEEEVT. Ig-like domains lie at 3095–3177 and 3179–3264; these read KEVM…SGLY and TERS…SFVS. Positions 3362 to 3692 are disordered; the sequence is EVPKVAEPSE…NAEAQKVVDS (331 aa). The segment covering 3655-3665 has biased composition (acidic residues); sequence SEEETPLEETN. Ig-like domains lie at 3789–3878, 3897–3985, and 4038–4125; these read PVFT…CEIV, PHFV…CTID, and PPYF…CVLT. 2 disulfides stabilise this stretch: Cys-3919–Cys-3969 and Cys-4059–Cys-4109. 14 disordered regions span residues 4553–4599, 4634–4699, 4750–4814, 4826–4855, 4912–4931, 4950–4969, 4989–5216, 5267–5294, 5306–5325, 5345–5372, 5428–6101, 6127–6157, 6214–6900, and 6930–8453; these read QSRE…SAPT, TVEP…EIVE, GSTA…TSEV, PVPE…EVQP, STAA…VESK, PETS…PVES, PETS…EILE, GSTA…EVEP, PETS…SVES, PETS…EVEP, GSTA…VEPT, VQVP…EVQP, STAA…ETSE, and APVE…DDKL. The segment covering 4555–4577 has biased composition (basic and acidic residues); that stretch reads RELDNTERNFTVNKEKDESKKPS. 56 PVET repeats span residues 4599–4626, 4627–4665, 4666–4704, 4755–4787, 4788–4826, 4827–4865, 4917–4948, 4949–4987, 4988–5026, 5027–5065, 5066–5104, 5105–5143, 5144–5182, 5183–5221, 5273–5304, 5305–5343, 5344–5382, 5434–5465, 5466–5504, 5505–5543, 5544–5582, 5583–5621, 5622–5660, 5661–5699, 5700–5738, 5739–5777, 5778–5816, 5817–5855, 5856–5894, 5895–5933, 5934–5972, 5973–6011, 6012–6050, 6051–6089, 6090–6128, 6129–6167, 6219–6250, 6251–6289, 6290–6328, 6329–6367, 6368–6406, 6407–6445, 6446–6484, 6485–6523, 6524–6562, 6563–6601, 6602–6640, 6641–6679, 6680–6718, 6719–6757, 6758–6796, 6797–6835, 6836–6874, 6875–6913, 6914–6952, and 6953–6991; these read TVEK…KDVP, VPET…KDVP, VPET…KDVT, PAQE…KDVP, AQEP…KDVP, VPET…KVVP, VPET…KDVS, VPET…KDVQ, AHEP…KDVP, VPET…KDLP, VPET…KDVA, VPEA…KDVP, and VPEA…KLKK. 2 stretches are compositionally biased toward basic and acidic residues: residues 4638–4651 and 4677–4691; these read TVEK…KETS and TVEK…EKSE. The span at 4960 to 4969 shows a compositional bias: basic and acidic residues; sequence TVEKLKPVES. A compositionally biased stretch (basic and acidic residues) spans 5038-5051; the sequence is TVEKLKPVESKETS. 2 stretches are compositionally biased toward basic and acidic residues: residues 5116–5129 and 5155–5168; these read TVEK…KETS. A coiled-coil region spans residues 5212–5235; the sequence is AEILEQKDVTCEEEIKELLTEVEV. Residues 5316-5325 are compositionally biased toward basic and acidic residues; that stretch reads TVEKLKSVES. Composition is skewed to basic and acidic residues over residues 5477-5490 and 5516-5529; these read TVEK…KETS. Composition is skewed to basic and acidic residues over residues 6690–6704, 6729–6743, 6768–6782, 6807–6821, 6846–6860, and 6885–6899; these read PTKE…KETS. 4 stretches are compositionally biased toward basic and acidic residues: residues 6972 to 7606, 7613 to 7630, 7637 to 8062, and 8069 to 8453; these read ESKE…DNFK, LQKE…DNFK, and LQKE…DDKL. A coiled-coil region spans residues 6984-7812; it reads QADAKLKKEK…DKLKQETDAK (829 aa). BLUE repeat units lie at residues 6992–6996, 6997–7012, 7013–7028, 7029–7044, 7045–7060, 7061–7076, 7077–7092, 7093–7108, 7109–7124, 7125–7140, 7141–7156, 7157–7172, 7173–7188, 7189–7204, 7205–7220, 7221–7236, 7237–7252, 7253–7268, 7269–7284, 7285–7300, 7301–7316, 7317–7332, 7333–7348, 7349–7364, 7365–7380, 7381–7396, 7397–7412, 7413–7428, 7429–7444, 7445–7460, 7461–7476, 7477–7492, 7493–7508, 7509–7524, 7525–7540, 7541–7556, 7557–7572, 7573–7588, 7589–7604, 7605–7620, 7621–7628, 7629–7644, 7645–7652, 7653–7668, 7669–7684, 7685–7700, 7701–7716, 7717–7732, 7733–7748, 7749–7764, 7765–7772, 7773–7788, 7789–7804, 7805–7820, 7821–7836, 7837–7852, 7853–7868, 7869–7884, 7885–7900, 7901–7916, 7917–7932, 7933–7948, 7949–7964, 7965–7980, 7981–7996, 7997–8012, 8013–8028, 8029–8044, 8045–8060, 8061–8076, 8077–8084, 8085–8100, 8101–8116, 8117–8132, 8133–8148, 8149–8164, 8165–8180, 8181–8196, 8197–8212, 8213–8228, 8229–8244, 8245–8260, 8261–8276, 8277–8292, 8293–8308, 8309–8324, 8325–8340, 8341–8356, 8357–8371, 8373–8388, 8389–8404, 8405–8420, 8421–8436, 8437–8452, 8453–8468, and 8469–8484; these read EKDDK, HKQE…NDDK, LKQE…NDDK, LKQE…KHDK, LKQE…KDDK, LKQD…KDDK, LKHE…KDDK, LKQE…KDDR, LKKD…KDDK, LKHE…KDDN, FKQE…KDDK, LKQEKDDN, LKQEKDDK, LKQEKNDK, LKQE…KDNK, LKQE…KDDN, LKQE…EKDD, and LKQE…KGDK. Positions 7876-8273 form a coiled coil; the sequence is KLKKEKDNKL…EADAKLKKDK (398 aa). Residues 8316–8490 are a coiled coil; it reads KLKKEKDNKL…KGDKLKLEDQ (175 aa). Residues 8599 to 8611 show a composition bias toward basic residues; the sequence is KHLKKKKKHHKKE. The disordered stretch occupies residues 8599–8626; it reads KHLKKKKKHHKKEKIAVKETEQDEKTVS. Residues 8612–8626 show a composition bias toward basic and acidic residues; that stretch reads KIAVKETEQDEKTVS. Residues 8950-9041 form the Fibronectin type-III 1 domain; it reads KPRKAQLVAL…EIIEVNTLDY (92 aa). Disordered regions lie at residues 9079-9104, 9147-9436, 9481-9609, 9702-10224, 10239-10274, 10539-11018, 11030-11111, 11123-11213, 11225-11387, 11420-11592, 11624-11825, 11872-11955, 11996-12054, 12397-12418, 12537-12974, 13026-13045, 13065-13261, 13283-13514, 13553-13574, and 13594-13874; these read IEEH…LDSE, VQKI…AAAE, EEQS…ETES, ADAV…ESRI, ESDD…EDSP, QSAP…DSFT, EDAV…QKDQ, KKLA…QDKT, AKTT…SLTS, KGLN…NPEL, LTKK…SDNL, LSAH…TSLS, TNLI…LQKN, GRRV…RKKR, EESR…PAES, EAAK…TEVV, AAEA…LNDK, QAQA…EQLK, EEKQ…KLKL, and EKLA…RRTG. The span at 9084–9093 shows a compositional bias: basic residues; sequence KLKKKSKKSK. Composition is skewed to basic and acidic residues over residues 9172–9184 and 9191–9202; these read VKKD…KKSL and TKKEIQGKPEKK. Residues 9213–9231 are compositionally biased toward polar residues; it reads SSISETSETLTKDLTQTKQ. Positions 9232–9267 are enriched in basic and acidic residues; the sequence is SEPEPAKRTTETSVQDEVKRKTETTSKSKQTTEEHP. The span at 9273-9283 shows a compositional bias: low complexity; the sequence is SDSSISSTSDA. The span at 9295–9332 shows a compositional bias: basic and acidic residues; it reads EAQKVTEKPETAKLESKSKMTEDTTKESDNKETVDEKP. The span at 9346–9359 shows a compositional bias: low complexity; it reads STISETSETSAVES. The stretch at 9371–9510 forms a coiled coil; that stretch reads AAVDKEKKQK…QTKAKAAEKQ (140 aa). Basic and acidic residues-rich tracts occupy residues 9373–9436 and 9481–9521; these read VDKE…AAAE and EEQS…KSNK. Residues 9547 to 9558 are compositionally biased toward low complexity; sequence SSISQKSDTSKT. The stretch at 9577 to 9749 forms a coiled coil; sequence TSKQKETDKK…QTVEEQAKLD (173 aa). Composition is skewed to basic and acidic residues over residues 9578–9609 and 9702–9783; these read SKQK…ETES and ADAV…DEKP. Residues 9798–9809 are compositionally biased toward polar residues; that stretch reads SISQKSVTSKTV. 3 stretches are compositionally biased toward basic and acidic residues: residues 9819 to 10004, 10040 to 10149, and 10162 to 10196; these read ETQK…DEKP, ETQK…KSEN, and VKSE…EPKE. Coiled-coil stretches lie at residues 9822–9995 and 10046–10129; these read KVAD…TEEA and EADK…TSKK. Residues 10197 to 10206 are compositionally biased toward basic residues; that stretch reads KKKIIKKKKD. Positions 10207–10224 are enriched in basic and acidic residues; sequence TTKPQEASKELSSDESRI. Polar residues predominate over residues 10239–10250; the sequence is ESDDLSTASTIK. Positions 10461–10553 constitute a Fibronectin type-III 2 domain; that stretch reads KPTSLQVTST…DTIEATTQAE (93 aa). A compositionally biased stretch (basic and acidic residues) spans 10566-10609; the sequence is EKVKEPVSKKPENTKESEGHKKRDRKESEDHDENNLGKSGKDEF. Over residues 10612–10637 the composition is skewed to polar residues; sequence SGESGTSNQNEESAQLNTSFTSTEQH. A compositionally biased stretch (acidic residues) spans 10663-10680; that stretch reads IDADVVEVEYDEQGDDIP. Positions 10707-10716 are enriched in basic and acidic residues; sequence MAEKDSDAME. The span at 10779–10790 shows a compositional bias: polar residues; the sequence is ADQTGMSIQDLN. Composition is skewed to basic and acidic residues over residues 10840–10852 and 10863–10884; these read QLDK…DDKM and KKPE…KESD. Positions 10961–10975 are enriched in polar residues; the sequence is LSTSEQVENASQNLG. Basic and acidic residues-rich tracts occupy residues 10999–11009, 11045–11055, and 11076–11089; these read IHGEAESKLGE, SAEKTSLEVRD, and SNRD…RDLN. Residues 11018-11064 are a coiled coil; the sequence is TLQDLYEELKAKEDAVEAGAETSNADQSAEKTSLEVRDMKKKMKKKQ. Residues 11090–11108 are compositionally biased toward polar residues; it reads TQHSNQTGEDESSTFNFGQ. A compositionally biased stretch (basic and acidic residues) spans 11159-11173; the sequence is KKGEENEKTKFEAKH. The span at 11174 to 11187 shows a compositional bias: low complexity; the sequence is LGSSSASDSLAEST. 3 stretches are compositionally biased toward basic and acidic residues: residues 11195–11211, 11271–11280, and 11295–11318; these read KGEV…KNQD, IPDKNRDSDK, and ESAE…EKTL. The segment covering 11374–11387 has biased composition (polar residues); that stretch reads SKVTTSFADESLTS. Composition is skewed to basic and acidic residues over residues 11440-11464 and 11472-11485; these read KVKD…KDQK and GSKD…EEKT. Over residues 11503–11515 the composition is skewed to polar residues; that stretch reads MTDQKNVQESQYA. Basic and acidic residues-rich tracts occupy residues 11624-11635, 11645-11669, and 11722-11735; these read LTKKQDENDAKK, AKKD…DSRE, and VSEK…EKTV. Residues 11754–11767 show a composition bias toward polar residues; it reads ESLNASSALSTTDV. Residues 11916–11937 show a composition bias toward basic and acidic residues; the sequence is AEDKYVESRKKTTLKKKPEQKQ. The stretch at 12408-12428 forms a coiled coil; that stretch reads ELDDAKKRKKRRIKRVVERRN. One can recognise an Ig-like 12 domain in the interval 12432–12547; sequence PRLTQLIPPR…ESRDDDKSVD (116 aa). Basic and acidic residues-rich tracts occupy residues 12537–12547, 12555–12567, and 12609–12689; these read EESRDDDKSVD, LEEK…DKSK, and VGAK…KKDA. Residues 12690 to 12701 are compositionally biased toward low complexity; that stretch reads SQPSSSKESSPP. The span at 12729-12740 shows a compositional bias: polar residues; sequence TMHSETNITTTI. Composition is skewed to basic and acidic residues over residues 12766 to 12839, 12852 to 12865, and 12889 to 12940; these read ESAK…KNKS, ETKK…EVPK, and PADD…DDKS. Residues 12797–12828 are a coiled coil; sequence KKSEKKDEVTAEKQSTEALIESKKKEVDESKI. Residues 12980–13103 are a coiled coil; sequence AEVNKAKKQK…LKLEEESAAK (124 aa). Composition is skewed to basic and acidic residues over residues 13065–13124, 13133–13145, 13176–13191, 13203–13261, 13283–13327, 13337–13354, and 13361–13416; these read AAEA…KAGE, PTSK…KDVG, TDSE…DEPT, EADK…LNDK, QAQA…EKQA, AVKK…EANK, and LKIE…DEKP. Positions 13237-13380 form a coiled coil; it reads LDAQEKIKKV…SKQTVEEQAK (144 aa). The span at 13431–13442 shows a compositional bias: polar residues; that stretch reads SISQKSETSKTV. Residues 13452-13514 show a composition bias toward basic and acidic residues; the sequence is ETQKVADAAR…KQKEKDEQLK (63 aa). Residues 13455–13628 adopt a coiled-coil conformation; that stretch reads KVADAARKQK…ETKSKQTEEA (174 aa). Residues 13594–13637 show a composition bias toward basic and acidic residues; it reads EKLAQEQSRLEDEAKKSAEKQKLESETKSKQTEEAPKESVDEKP. The segment covering 13651–13662 has biased composition (low complexity); sequence SSISQKSKSAKS. Over residues 13684 to 13696 the composition is skewed to polar residues; the sequence is KVEQSPDESTSAT. The span at 13697-13735 shows a compositional bias: basic and acidic residues; it reads IKRDPAQKTEEISKQDDGDEKKTTTDGKPPKPEDSEATP. Positions 13747–13760 are enriched in low complexity; that stretch reads SDSVASDASLADVS. A compositionally biased stretch (basic and acidic residues) spans 13761-13770; that stretch reads KLSDDVEEKP. A compositionally biased stretch (polar residues) spans 13784–13793; it reads SVISETSSVD. Composition is skewed to basic and acidic residues over residues 13795 to 13808 and 13824 to 13843; these read IKPE…EKAE and SEPK…DMMT. Residues 13963-14036 enclose the Ig-like 13 domain; it reads PVDFVKYLPR…RAKYEDSGKY (74 aa). Fibronectin type-III domains follow at residues 14153–14247, 14253–14348, and 14350–14448; these read APGD…TGSP, VEFP…TVEG, and VPEI…VLAD. Ig-like domains lie at 14451–14542, 14550–14634, and 14638–14727; these read PRVL…VGIS, SSFS…VIVN, and PHIL…LVFE. Cys-14568 and Cys-14618 form a disulfide bridge. Fibronectin type-III domains follow at residues 14826 to 14920 and 14937 to 15027; these read APCD…TLES and ILRT…LVPG. The segment at 15011–15180 is disordered; sequence VSSPSEETNP…TGKETTEKKK (170 aa). 2 stretches are compositionally biased toward basic and acidic residues: residues 15034 to 15060 and 15085 to 15117; these read KTEK…EKQV and KVAE…ESRR. Polar residues predominate over residues 15118 to 15132; the sequence is GSLQASSDNESVTTT. The span at 15133–15177 shows a compositional bias: basic and acidic residues; that stretch reads SEKRSEAELEKNSEKSAEKKSTSADLEAADKAETEKSETGKETTE. 2 Ig-like domains span residues 15180-15274 and 15283-15371; these read KKVV…VSIA and PKVE…IALR. 2 Fibronectin type-III domains span residues 15383–15475 and 15503–15596; these read PTGP…LKKK and QIGK…TTES. The segment at 15470-15503 is disordered; the sequence is TTLKKKEETGKQKSEKSESDEKKSESDKVSELKQ. Over residues 15473–15503 the composition is skewed to basic and acidic residues; sequence KKKEETGKQKSEKSESDEKKSESDKVSELKQ. 2 Ig-like domains span residues 15599 to 15687 and 15692 to 15786; these read PAFT…CKLT and PEIN…IQVT. Positions 15791–15883 constitute a Fibronectin type-III 10 domain; that stretch reads APGKPAVEDQ…DESELVVVKN (93 aa). In terms of domain architecture, Protein kinase spans 15934 to 16189; the sequence is YIIHEELGKG…VQDALRHPWI (256 aa). ATP-binding positions include 15940–15948 and Lys-15963; that span reads LGKGAYGTV. The Proton acceptor role is filled by Asp-16055. An autoinhibitory domain region spans residues 16206–16264; the sequence is KMQPKLDKSGVPARQKRNFLSLKRWSDDLLPIGRLAKRGAIFRRLTMDGVFERNIAFDT. 4 Ig-like domains span residues 16268-16358, 16500-16575, 16605-16692, and 16705-16789; these read PSVK…AKLS, GKQL…VAKN, PRFR…FSVV, and PKFL…KDFT. Cystine bridges form between Cys-16290–Cys-16342, Cys-16508–Cys-16571, Cys-16627–Cys-16677, and Cys-16726–Cys-16778. The segment at 16805–16827 is disordered; the sequence is LTPVRSRSRSRSRSPSVVGGEIQ. 3 consecutive Ig-like domains span residues 16829-16918, 16932-17025, and 17037-17126; these read PPVV…AIVV, PTFV…LTIS, and PYFI…TEVS. Positions 17121 to 17169 are disordered; sequence QNTEVSVTKSKEVKEKKEKKKVEKKDEGKKKPGRPGLPRPSGASKTEQV. A compositionally biased stretch (basic and acidic residues) spans 17129-17150; the sequence is KSKEVKEKKEKKKVEKKDEGKK. The region spanning 17154–17245 is the Fibronectin type-III 11 domain; the sequence is RPGLPRPSGA…MTSTLKTASV (92 aa). 11 Ig-like domains span residues 17249–17336, 17358–17447, 17457–17548, 17570–17661, 17676–17765, 17782–17873, 18008–18097, 18121–18213, 18224–18316, 18329–18417, and 18429–18519; these read PQFT…CQVT, PTLQ…CNVA, PSFS…VMIA, PRFT…TQVI, PKFT…QATT, PRFV…LNVS, PKFM…SEID, PNFI…LQVS, PPLF…MQLD, PRVF…LELT, and PKFN…MILS. Disulfide bonds link Cys-17379-Cys-17431 and Cys-17478-Cys-17530. Cys-17697 and Cys-17754 are disulfide-bonded. An intrachain disulfide couples Cys-18143 to Cys-18195.

Belongs to the protein kinase superfamily. CAMK Ser/Thr protein kinase family. Interacts (via C-terminus) with myosin. Interacts with actin. Mg(2+) serves as cofactor. Expression is restricted to body wall, enteric and vulval muscles.

It is found in the cytoplasm. It localises to the myofibril. The protein localises to the sarcomere. The protein resides in the a band. Its subcellular location is the i band. It is found in the nucleus membrane. The catalysed reaction is L-seryl-[protein] + ATP = O-phospho-L-seryl-[protein] + ADP + H(+). The enzyme catalyses L-threonyl-[protein] + ATP = O-phospho-L-threonyl-[protein] + ADP + H(+). Its function is as follows. Serine/threonine-protein kinase. Key component in the assembly and functioning of muscles. By providing connections at the level of individual microfilaments, it contributes to the fine balance of forces between the two halves of the sarcomere. The size and extensibility of the cross-links are the main determinants of sarcomere extensibility properties of muscle. In non-muscle cells, seems to play a role in chromosome condensation and chromosome segregation during mitosis. Might link the lamina network to chromatin or nuclear actin, or both during interphase. This Caenorhabditis elegans protein is Titin homolog.